The chain runs to 399 residues: Elongation factor Tu (399 aa).

A tr-type G domain is found at 10-209 (KPHVNIGTIG…AVDEYIPEPT (200 aa)). Residues 19-26 (GHVDHGKT) form a G1 region. 19–26 (GHVDHGKT) contributes to the GTP binding site. T26 lines the Mg(2+) pocket. The tract at residues 60-64 (GITIA) is G2. The G3 stretch occupies residues 81 to 84 (DCPG). Residues 81–85 (DCPGH) and 136–139 (NKED) each bind GTP. The interval 136–139 (NKED) is G4. The segment at 174 to 176 (SAK) is G5.

Belongs to the TRAFAC class translation factor GTPase superfamily. Classic translation factor GTPase family. EF-Tu/EF-1A subfamily. Monomer.

It is found in the cytoplasm. It catalyses the reaction GTP + H2O = GDP + phosphate + H(+). GTP hydrolase that promotes the GTP-dependent binding of aminoacyl-tRNA to the A-site of ribosomes during protein biosynthesis. In Sulfurimonas denitrificans (strain ATCC 33889 / DSM 1251) (Thiomicrospira denitrificans (strain ATCC 33889 / DSM 1251)), this protein is Elongation factor Tu.